Reading from the N-terminus, the 396-residue chain is F-box protein pof13 (396 aa).

Residues Lys-40–Asn-89 form the F-box domain.

Part of a SCF (SKP1-cullin-F-box) protein ligase complex. Interacts with skp1.

The protein resides in the cytoplasm. It functions in the pathway protein modification; protein ubiquitination. The polypeptide is F-box protein pof13 (pof13) (Schizosaccharomyces pombe (strain 972 / ATCC 24843) (Fission yeast)).